Here is a 302-residue protein sequence, read N- to C-terminus: Vomeronasal type-1 receptor 48 (302 aa).

Residues 1 to 16 are Extracellular-facing; sequence MNENSRLHTHSNIRNT. Residues 17 to 37 traverse the membrane as a helical segment; sequence FFSEIGIGISGNSFLLLFHII. The Cytoplasmic portion of the chain corresponds to 38–49; sequence KFFRGHRPRLTD. The chain crosses the membrane as a helical span at residues 50-70; it reads LPIGLLSLIHLLMLLVAAVIA. At 71–91 the chain is on the extracellular side; sequence TDIFISWRGWNDIICKFLVYL. C85 and C172 are oxidised to a cystine. The chain crosses the membrane as a helical span at residues 92–114; the sequence is YRSLRGLSLCTTSMLSVLQAIIL. Topologically, residues 115–131 are cytoplasmic; the sequence is SPRSYCLAKFKRKSSHN. A helical membrane pass occupies residues 132 to 152; that stretch reads ISCAIIFLSVLYMSISSHLLI. Residues 153-193 lie on the Extracellular side of the membrane; the sequence is SITATPNLTMNDFLYVSQSCSLLPLSYLMQSIYSTLLVLRE. A glycan (N-linked (GlcNAc...) asparagine) is linked at N159. A helical membrane pass occupies residues 194-214; sequence VFLIGLMVLSTSYMVALLYMH. Residues 215–238 lie on the Cytoplasmic side of the membrane; the sequence is RKQAQNLQGTSLSLKASAEQRATQ. Residues 239–259 form a helical membrane-spanning segment; sequence TILMLMTFFVLMSIFDSIVSC. The Extracellular segment spans residues 260 to 269; that stretch reads SRTMFLDDPT. Residues 270–290 traverse the membrane as a helical segment; that stretch reads SYSIHIFVMHIYATVSPFVFI. At 291 to 302 the chain is on the cytoplasmic side; it reads STEKHIVNILRG.

The protein belongs to the G-protein coupled receptor 1 family.

It localises to the cell membrane. Functionally, putative pheromone receptor implicated in the regulation of social and reproductive behavior. This chain is Vomeronasal type-1 receptor 48 (Vmn1r48), found in Mus musculus (Mouse).